Consider the following 696-residue polypeptide: UvrABC system protein B (696 aa).

The 390-residue stretch at 45–434 (EGIGDGLSYQ…DEVVEQVVRP (390 aa)) folds into the Helicase ATP-binding domain. ATP is bound at residue 58-65 (GVTGSGKT). Residues 111–134 (YYDYYQPEAYVPQRDLFIEKDSSV) carry the Beta-hairpin motif. The Helicase C-terminal domain occupies 450 to 616 (QVDDLLSEIH…GVVKRIKDII (167 aa)). Residues 647 to 682 (GKEIKRLEKQMLDHAKNLEFEKAAAVRDQLAKLKSQ) form the UVR domain.

It belongs to the UvrB family. As to quaternary structure, forms a heterotetramer with UvrA during the search for lesions. Interacts with UvrC in an incision complex.

It localises to the cytoplasm. The UvrABC repair system catalyzes the recognition and processing of DNA lesions. A damage recognition complex composed of 2 UvrA and 2 UvrB subunits scans DNA for abnormalities. Upon binding of the UvrA(2)B(2) complex to a putative damaged site, the DNA wraps around one UvrB monomer. DNA wrap is dependent on ATP binding by UvrB and probably causes local melting of the DNA helix, facilitating insertion of UvrB beta-hairpin between the DNA strands. Then UvrB probes one DNA strand for the presence of a lesion. If a lesion is found the UvrA subunits dissociate and the UvrB-DNA preincision complex is formed. This complex is subsequently bound by UvrC and the second UvrB is released. If no lesion is found, the DNA wraps around the other UvrB subunit that will check the other stand for damage. In Ralstonia nicotianae (strain ATCC BAA-1114 / GMI1000) (Ralstonia solanacearum), this protein is UvrABC system protein B.